The following is a 137-amino-acid chain: Large ribosomal subunit protein mL41 (137 aa).

The N-terminal 13 residues, 1 to 13 (MGVLAAAARCLVR), are a transit peptide targeting the mitochondrion.

The protein belongs to the mitochondrion-specific ribosomal protein mL41 family. Component of the mitochondrial large ribosomal subunit (mt-LSU). Mature mammalian 55S mitochondrial ribosomes consist of a small (28S) and a large (39S) subunit. The 28S small subunit contains a 12S ribosomal RNA (12S mt-rRNA) and 30 different proteins. The 39S large subunit contains a 16S rRNA (16S mt-rRNA), a copy of mitochondrial valine transfer RNA (mt-tRNA(Val)), which plays an integral structural role, and 52 different proteins. Interacts with BCL2. As to expression, present in kidney, liver, thymus and testis, and at lower level in brain and spleen (at protein level).

Its subcellular location is the mitochondrion. Component of the mitochondrial ribosome large subunit. Also involved in apoptosis and cell cycle. Enhances p53/TP53 stability, thereby contributing to p53/TP53-induced apoptosis in response to growth-inhibitory condition. Enhances p53/TP53 translocation to the mitochondria. Has the ability to arrest the cell cycle at the G1 phase, possibly by stabilizing the CDKN1A and CDKN1B (p27Kip1) proteins. The sequence is that of Large ribosomal subunit protein mL41 (MRPL41) from Homo sapiens (Human).